A 407-amino-acid chain; its full sequence is Lysine racemase (407 aa).

Residues 1 to 18 form the signal peptide; it reads MSLGIRYLALLPLFVITA. Cys19 carries N-palmitoyl cysteine lipidation. The S-diacylglycerol cysteine moiety is linked to residue Cys19. Cys70 and Cys96 are joined by a disulfide. Lys74 (proton acceptor) is an active-site residue. N6-(pyridoxal phosphate)lysine is present on Lys74. Substrate is bound at residue Arg173. Catalysis depends on Tyr299, which acts as the Proton acceptor. Met347 is a binding site for substrate.

The protein belongs to the alanine racemase family. Bsr subfamily. In terms of assembly, forms a head-to-tail homodimer in the structure. The cofactor is pyridoxal 5'-phosphate.

It localises to the cell membrane. The protein localises to the periplasm. It carries out the reaction L-lysine = D-lysine. The enzyme catalyses L-arginine = D-arginine. With respect to regulation, the racemization activity of Lyr is completely inhibited by hydroxylamine. Amino-acid racemase that catalyzes the interconversion of L-lysine and D-lysine. To a lesser extent, is also able to interconvert arginine enantiomers. Cannot use methionine, asparagine, alanine, leucine, glutamine, phenylalanine and histidine as substrates. This is Lysine racemase from Proteus mirabilis.